We begin with the raw amino-acid sequence, 375 residues long: Glutaconyl-CoA decarboxylase subunit beta (375 aa).

Transmembrane regions (helical) follow at residues 16-39, 46-65, 74-96, 107-130, 137-153, 160-178, 208-232, 254-271, 284-302, 316-332, and 345-369; these read GFVA…YLAI, LLLS…RTGF, LILG…GAMT, TLLL…LLGF, AIGI…IYLA, LLGA…VPLI, VVFP…IGML, ALMN…GLTM, IICL…GVLF, PLIG…AARV, and FLLM…GTML.

It belongs to the GcdB/MmdB/OadB family. Heterooctamer consisting of two alpha, two beta, two gamma and two delta subunits. The N-terminus is blocked.

It localises to the cell membrane. The catalysed reaction is (2E)-glutaconyl-CoA + Na(+)(in) + H(+) = (2E)-butenoyl-CoA + Na(+)(out) + CO2. It participates in amino-acid degradation; L-glutamate degradation via hydroxyglutarate pathway; crotonoyl-CoA from L-glutamate: step 5/5. In terms of biological role, tunnel subunit of the primary sodium pump glutaconyl-CoA decarboxylase (GCD). In Acidaminococcus fermentans (strain ATCC 25085 / DSM 20731 / CCUG 9996 / CIP 106432 / VR4), this protein is Glutaconyl-CoA decarboxylase subunit beta (gcdB).